A 304-amino-acid chain; its full sequence is Protease HtpX homolog (304 aa).

Helical transmembrane passes span 14 to 34 and 39 to 59; these read VFIV…IGII and YLNG…IMVM. His-144 is a Zn(2+) binding site. Residue Glu-145 is part of the active site. His-148 contacts Zn(2+). The next 2 membrane-spanning stretches (helical) occupy residues 161–181 and 202–222; these read IALV…IFWG and LIIY…ATAI. Zn(2+) is bound at residue Glu-231. The interval 276 to 295 is disordered; the sequence is SPLKSKKDKPGIFDSHPPIS.

It belongs to the peptidase M48B family. The cofactor is Zn(2+).

The protein resides in the cell membrane. This is Protease HtpX homolog from Listeria welshimeri serovar 6b (strain ATCC 35897 / DSM 20650 / CCUG 15529 / CIP 8149 / NCTC 11857 / SLCC 5334 / V8).